The following is a 921-amino-acid chain: Short transient receptor potential channel 3 (921 aa).

A disordered region spans residues 1 to 73 (MSTKVRKCKE…PPFSHGPDLS (73 aa)). Residues 1-459 (MSTKVRKCKE…KILRSPFMKF (459 aa)) are Cytoplasmic-facing. Positions 19–31 (PEEEEDEGEDEGA) are enriched in acidic residues. ANK repeat units follow at residues 111–140 (AEEERFLDAAEYGNIPVVRKMLEESKTLNV), 146–175 (MGQNALQLAVGNEHLEVTELLLKKENLARI), 177–203 (DALLLAISKGYVRIVEAILNHPGFAAS), and 232–261 (PDITPIILAAHCQKYEVVHMLLMKGARIER). Glutamate 158 provides a ligand contact to Ca(2+). Residues 460-477 (VAHAASFIIFLGLLVFNA) form a helical membrane-spanning segment. Topologically, residues 478–508 (SDRFEGITTLPNITVTDYPKQIFRVKTTQFT) are extracellular. A glycan (N-linked (GlcNAc...) asparagine) is linked at asparagine 489. A helical transmembrane segment spans residues 509-527 (WTEMLIMVWVLGMMWSECK). Glutamate 525, glutamate 528, and asparagine 543 together coordinate Ca(2+). The Cytoplasmic segment spans residues 528–540 (ELWLEGPREYILQ). A helical transmembrane segment spans residues 541–562 (LWNVLDFGMLSIFIAAFTARFL). Over 563–606 (AFLQATKAQQYVDSYVQESDLSEVTLPPEIQYFTYARDKWLPSD) the chain is Extracellular. A helical membrane pass occupies residues 607-630 (PQIISEGLYAIAVVLSFSRIAYIL). Residues 631-649 (PANESFGPLQISLGRTVKD) lie on the Cytoplasmic side of the membrane. The stretch at 634–663 (ESFGPLQISLGRTVKDIFKFMVLFIMVFFA) is one ANK 5 repeat. Residues 650–673 (IFKFMVLFIMVFFAFMIGMFILYS) traverse the membrane as a helical segment. At 674–713 (YYLGAKVNAAFTTVEESFKTLFWSIFGLSEVTSVVLKYDH) the chain is on the extracellular side. A helical membrane pass occupies residues 714–739 (KFIENIGYVLYGIYNVTMVVVLLNML). Topologically, residues 740–921 (IAMINSSYQE…KLNPSMLRCE (182 aa)) are cytoplasmic. Positions 850 to 870 (QIMKRLIKRYVLKAQVDKEND) are binds to IP3R3. Ca(2+)-binding residues include glutamate 871, glutamate 874, glutamate 876, and aspartate 883.

The protein belongs to the transient receptor (TC 1.A.4) family. STrpC subfamily. TRPC3 sub-subfamily. Homotetramer. Interacts with ITPR1. Interacts with ITPR3. Interacts with MX1. Interacts with RNF24. Interacts with JPH2; the interaction is involved in maintaining Ca(2+) homeostasis in skeletal muscle and is mediated by JPH2 'Ser-165' phosphorylation. As to quaternary structure, interacts with isoform short of TRPC1. Expressed predominantly in brain and at much lower levels in ovary, colon, small intestine, lung, prostate, placenta and testis.

The protein resides in the cell membrane. It catalyses the reaction Ca(2+)(in) = Ca(2+)(out). Its activity is regulated as follows. Activated by diacylglycerol (DAG) in a membrane-delimited fashion, independently of protein kinase C. Activated by inositol 1,4,5-triphosphate receptors (ITPR) with bound IP3. May be activated by internal calcium store depletion. Inhibited by intracellular Ca(2+). Functionally, forms a receptor-activated non-selective calcium permeant cation channel. In terms of biological role, forms a receptor-activated non-selective calcium permeant cation channel. May be operated by a phosphatidylinositol second messenger system activated by receptor tyrosine kinases or G-protein coupled receptors. This Homo sapiens (Human) protein is Short transient receptor potential channel 3 (TRPC3).